The primary structure comprises 124 residues: MTAYGHMPGEAIECLSIAVELHKQEVIDAHGQVTIRVGFKIGGGIDQDPTKAPFKYPDSGVYITNVESGSPADVAGLRKHDKILQVNGADFTMMTHDRAVKFIKQSKVLHMLVARADLPPVSLH.

In terms of domain architecture, PDZ spans 18 to 106 (AVELHKQEVI…DRAVKFIKQS (89 aa)).

In terms of biological role, may regulate a number of protein-protein interactions by competing for PDZ domain binding sites. The protein is Tax1-binding protein 3 homolog of Caenorhabditis elegans.